The following is a 635-amino-acid chain: Leucine-rich repeat and fibronectin type-III domain-containing protein 4 (635 aa).

The signal sequence occupies residues 1-16; the sequence is MAPPLLLLLLASGAAA. Residues 17-48 enclose the LRRNT domain; sequence CPLPCVCQNLSESLSTLCAHRGLLFVPPNVDR. Over 17–518 the chain is Extracellular; it reads CPLPCVCQNL…LQAHVLGGTL (502 aa). N-linked (GlcNAc...) asparagine glycans are attached at residues N25 and N70. LRR repeat units lie at residues 49 to 70, 73 to 94, 97 to 118, 121 to 142, 146 to 161, 170 to 191, and 194 to 215; these read RTVE…DFRN, GLVD…AFGD, SLRS…SLRG, NLQH…AFDD, SLED…RQVP, ALHT…AFAQ, and QLSR…PLFS. Residues 234-280 enclose the LRRCT domain; sequence NPLHCNCELLWLRRLARPDDLETCASPPGLAGRYFWAVPEGEFSCEP. An Ig-like domain is found at 281 to 367; the sequence is PLIARHTQRL…GEATARVELR (87 aa). C302 and C351 form a disulfide bridge. 4 N-linked (GlcNAc...) asparagine glycosylation sites follow: N324, N333, N376, and N440. The interval 373-410 is disordered; sequence HGGNSSAEGGRPGPSDIAASARTAAEGEGTLESEPAVQ. A Fibronectin type-III domain is found at 405–502; sequence SEPAVQVTEV…GCAHFSTLPA (98 aa). Residues 519 to 539 traverse the membrane as a helical segment; it reads TVAVGGVLVAALLVFTVALLV. The Cytoplasmic portion of the chain corresponds to 540–635; it reads RGRGAGNGRL…SAERLEESVV (96 aa). The tract at residues 555–583 is disordered; the sequence is HVQSQTNGGPSPTPKAHPPRSPPPRPQRS. Pro residues predominate over residues 565 to 580; the sequence is SPTPKAHPPRSPPPRP. A phosphoserine mark is found at S585 and S626. The PDZ-binding signature appears at 632 to 635; sequence ESVV.

This sequence belongs to the LRFN family. In terms of assembly, can form heteromeric complexes with LRFN1, LRFN2, LRFN3 and LRFN5. Unable to form homophilic interactions across cell junctions. Interacts with DLG1, DLG2, DLG3 and DLG4. Glycosylated.

The protein resides in the membrane. Functionally, promotes neurite outgrowth in hippocampal neurons. May play a role in redistributing DLG4 to the cell periphery. In Homo sapiens (Human), this protein is Leucine-rich repeat and fibronectin type-III domain-containing protein 4 (LRFN4).